Reading from the N-terminus, the 323-residue chain is MSQPWQPTASIKQLKQRAAVLSSIRDFFAGKEVIEVDTPAMSQATVTDVHLHTFQTEFVGPGYAGGQTLYMMTSPEFHMKRLLSAGSGPIYQICKSFRNEESGRYHNPEFTMLEWYRPDFDHHDLMNEMDELLQLVLQCDKAERMSYQQAFIQELGVCPLEGTMEQLKGVARTLGLADIADPEQDRDTLLQLLFSMGVENKIGQQVPAFVYDFPASQAALAQINPTDNRVAERFEVYFKGIELANGFHELANGDEQLVRFEQDNMKRISMGLKPQPIDLHLIEALRAGFPDCAGVALGIDRLIMLALKLDHIDQVTAFPIDIA.

Substrate is bound at residue 74–76; sequence SPE. Residues 98 to 100 and Asn107 contribute to the ATP site; that span reads RNE. Tyr116 is a substrate binding site. 242–243 lines the ATP pocket; sequence EL. Glu249 contacts substrate. Residue Gly298 coordinates ATP.

Belongs to the class-II aminoacyl-tRNA synthetase family. EpmA subfamily. As to quaternary structure, homodimer.

The catalysed reaction is D-beta-lysine + L-lysyl-[protein] + ATP = N(6)-((3R)-3,6-diaminohexanoyl)-L-lysyl-[protein] + AMP + diphosphate + H(+). In terms of biological role, with EpmB is involved in the beta-lysylation step of the post-translational modification of translation elongation factor P (EF-P). Catalyzes the ATP-dependent activation of (R)-beta-lysine produced by EpmB, forming a lysyl-adenylate, from which the beta-lysyl moiety is then transferred to the epsilon-amino group of a conserved specific lysine residue in EF-P. The sequence is that of Elongation factor P--(R)-beta-lysine ligase from Photobacterium profundum (strain SS9).